Consider the following 391-residue polypeptide: Terminal nucleotidyltransferase 5C (391 aa).

It belongs to the TENT family. As to quaternary structure, interacts with BCCIP and PABPC1; the interaction has no effect on TENT5C poly(A) polymerase function. Interacts with PLK4; this interaction leads to the TENT5C recruitment into the centrosome.

The protein localises to the nucleus. Its subcellular location is the cytoplasm. It is found in the cytoskeleton. The protein resides in the microtubule organizing center. It localises to the centrosome. It carries out the reaction RNA(n) + ATP = RNA(n)-3'-adenine ribonucleotide + diphosphate. In terms of biological role, catalyzes the transfer of one adenosine molecule from an ATP to an mRNA poly(A) tail bearing a 3'-OH terminal group and enhances mRNA stability and gene expression. Can also elongate RNA oligos ending with uridine molecule, provided that the sequence is adenosine-rich. Mainly targets mRNAs encoding endoplasmic reticulum-targeted protein. The protein is Terminal nucleotidyltransferase 5C of Rattus norvegicus (Rat).